The primary structure comprises 142 residues: Large ribosomal subunit protein uL13 (142 aa).

Belongs to the universal ribosomal protein uL13 family. Part of the 50S ribosomal subunit.

Its function is as follows. This protein is one of the early assembly proteins of the 50S ribosomal subunit, although it is not seen to bind rRNA by itself. It is important during the early stages of 50S assembly. This chain is Large ribosomal subunit protein uL13, found in Aliivibrio fischeri (strain ATCC 700601 / ES114) (Vibrio fischeri).